Reading from the N-terminus, the 336-residue chain is MSAQVIAIDAMGGDFGPRSIVQASIACLSATPSLHLTLVGQPSLLEDLISGLPAADRARLQIVAASEVVGMDERPSQALRGKPDSSMRIALELVRDGKAQACVSAGNTGALMALSRFVLKTLPGIDRPAMVAAIPTQTGYCQLLDLGANVDCSAENLYQFAVMGSVAAQALGVHRPRVALLNIGTEDIKGNQQVKLAATLLQSARGLNYVGFVEGDGLYRGEADVVVCDGFVGNILLKSSEGLATMIGARIEKLFKGGAFARVAGAVAMPLLKRLQADLAPARHNGASFLGLQGIVIKSHGSAGVQGFQSAIQRALIEIQENLPQRLHGRLEDLLP.

The protein belongs to the PlsX family. In terms of assembly, homodimer. Probably interacts with PlsY.

Its subcellular location is the cytoplasm. The catalysed reaction is a fatty acyl-[ACP] + phosphate = an acyl phosphate + holo-[ACP]. Its pathway is lipid metabolism; phospholipid metabolism. Its function is as follows. Catalyzes the reversible formation of acyl-phosphate (acyl-PO(4)) from acyl-[acyl-carrier-protein] (acyl-ACP). This enzyme utilizes acyl-ACP as fatty acyl donor, but not acyl-CoA. This chain is Phosphate acyltransferase, found in Pseudomonas putida (strain ATCC 700007 / DSM 6899 / JCM 31910 / BCRC 17059 / LMG 24140 / F1).